Consider the following 894-residue polypeptide: Protein translocase subunit SecA (894 aa).

Residues Gln-87, 105–109 (GEGKT), and Asp-512 each bind ATP. A disordered region spans residues 836 to 870 (EVEQAERERQAHAEQESSHYHAEGEGQDFSDLHIG). Zn(2+)-binding residues include Cys-875, Cys-877, Cys-886, and His-887.

It belongs to the SecA family. As to quaternary structure, monomer and homodimer. Part of the essential Sec protein translocation apparatus which comprises SecA, SecYEG and auxiliary proteins SecDF-YajC and YidC. Requires Zn(2+) as cofactor.

The protein localises to the cell inner membrane. It localises to the cytoplasm. It carries out the reaction ATP + H2O + cellular proteinSide 1 = ADP + phosphate + cellular proteinSide 2.. Functionally, part of the Sec protein translocase complex. Interacts with the SecYEG preprotein conducting channel. Has a central role in coupling the hydrolysis of ATP to the transfer of proteins into and across the cell membrane, serving both as a receptor for the preprotein-SecB complex and as an ATP-driven molecular motor driving the stepwise translocation of polypeptide chains across the membrane. The polypeptide is Protein translocase subunit SecA (Glaesserella parasuis serovar 5 (strain SH0165) (Haemophilus parasuis)).